Here is a 497-residue protein sequence, read N- to C-terminus: Lysine--tRNA ligase (497 aa).

E409 and E416 together coordinate Mg(2+).

Belongs to the class-II aminoacyl-tRNA synthetase family. Homodimer. Requires Mg(2+) as cofactor.

It is found in the cytoplasm. It catalyses the reaction tRNA(Lys) + L-lysine + ATP = L-lysyl-tRNA(Lys) + AMP + diphosphate. This Streptococcus pyogenes serotype M6 (strain ATCC BAA-946 / MGAS10394) protein is Lysine--tRNA ligase.